The sequence spans 254 residues: Cell division protein FtsQ (254 aa).

Over 1–27 (MNILKRKTPQNIRFGEQKPKYYFHIRA) the chain is Cytoplasmic. The chain crosses the membrane as a helical span at residues 28–48 (FAVLLGVFFLLGVYFNWQSIL). Topologically, residues 49–254 (EKMDDKPISA…AGAAVGMVDR (206 aa)) are periplasmic. Positions 54-124 (KPISAFALVG…NRLSIWVSEY (71 aa)) constitute a POTRA domain.

This sequence belongs to the FtsQ/DivIB family. FtsQ subfamily. Part of a complex composed of FtsB, FtsL and FtsQ.

The protein localises to the cell inner membrane. Functionally, essential cell division protein. May link together the upstream cell division proteins, which are predominantly cytoplasmic, with the downstream cell division proteins, which are predominantly periplasmic. May control correct divisome assembly. The protein is Cell division protein FtsQ of Haemophilus influenzae (strain ATCC 51907 / DSM 11121 / KW20 / Rd).